We begin with the raw amino-acid sequence, 335 residues long: Dolichyl-diphosphooligosaccharide--protein glycosyltransferase subunit MAGT1 (335 aa).

An N-terminal signal peptide occupies residues 1 to 29; it reads MASPRWLWCVCATAAVTLLLVSKVPSASA. Residues 30 to 184 lie on the Extracellular side of the membrane; it reads QRKKEKVLVE…DVNIRVIRPP (155 aa). One can recognise a Thioredoxin domain in the interval 47 to 175; that stretch reads WTNQRPVIRM…IARWIADRTD (129 aa). N-linked (GlcNAc...) asparagine glycosylation occurs at Asn71. A disulfide bond links Cys87 and Cys90. The helical transmembrane segment at 185–205 threads the bilayer; sequence NYAGPLMLGLLLAVIGGLVYL. The Cytoplasmic segment spans residues 206 to 209; the sequence is RRSN. A helical membrane pass occupies residues 210-230; sequence MEFLFNKTGWAFAALCFVLAM. Residues 231 to 270 are Extracellular-facing; the sequence is TSGQMWNHIRGPPYAHKNPHTGHVNYIHGSSQAQFVAETH. The helical transmembrane segment at 271–291 threads the bilayer; it reads IVLLFNGGVTLGMVLLCEAAA. The Cytoplasmic portion of the chain corresponds to 292-300; sequence SDMDIGKRR. Residues 301–321 form a helical membrane-spanning segment; sequence MMCIAGIGLVVLFFSWMLSIF. Topologically, residues 322–335 are extracellular; sequence RSKYHGYPYSFLMS.

This sequence belongs to the OST3/OST6 family. As to quaternary structure, accessory component of the STT3B-containing form of the oligosaccharyltransferase (OST) complex. OST exists in two different complex forms which contain common core subunits RPN1, RPN2, OST48, OST4, DAD1 and TMEM258, either STT3A or STT3B as catalytic subunits, and form-specific accessory subunits. OST can form stable complexes with the Sec61 complex or with both the Sec61 and TRAP complexes. The association of TUSC3 or MAGT1 with the STT3B-containing complex seems to be mutually exclusvice.

It is found in the cell membrane. The protein resides in the endoplasmic reticulum. It localises to the endoplasmic reticulum membrane. The protein operates within protein modification; protein glycosylation. Its function is as follows. Accessory component of the STT3B-containing form of the N-oligosaccharyl transferase (OST) complex which catalyzes the transfer of a high mannose oligosaccharide from a lipid-linked oligosaccharide donor to an asparagine residue within an Asn-X-Ser/Thr consensus motif in nascent polypeptide chains. Involved in N-glycosylation of STT3B-dependent substrates. Specifically required for the glycosylation of a subset of acceptor sites that are near cysteine residues; in this function seems to act redundantly with TUSC3. In its oxidized form proposed to form transient mixed disulfides with a glycoprotein substrate to facilitate access of STT3B to the unmodified acceptor site. Also has oxidoreductase-independent functions in the STT3B-containing OST complex possibly involving substrate recognition. Could indirectly play a role in Mg(2+) transport in epithelial cells. The sequence is that of Dolichyl-diphosphooligosaccharide--protein glycosyltransferase subunit MAGT1 from Rattus norvegicus (Rat).